A 598-amino-acid chain; its full sequence is Urease subunit alpha (598 aa).

One can recognise a Urease domain in the interval 136–598; sequence GGLDTHVHWL…APLAQRYFLF (463 aa). 3 residues coordinate Ni(2+): His141, His143, and Lys223. Lys223 is modified (N6-carboxylysine). Position 225 (His225) interacts with substrate. 2 residues coordinate Ni(2+): His252 and His278. His326 functions as the Proton donor in the catalytic mechanism. A Ni(2+)-binding site is contributed by Asp366.

Belongs to the metallo-dependent hydrolases superfamily. Urease alpha subunit family. In terms of assembly, heterotrimer of UreA (gamma), UreB (beta) and UreC (alpha) subunits. Three heterotrimers associate to form the active enzyme. Ni cation serves as cofactor. Post-translationally, carboxylation allows a single lysine to coordinate two nickel ions.

It localises to the cytoplasm. The enzyme catalyses urea + 2 H2O + H(+) = hydrogencarbonate + 2 NH4(+). It participates in nitrogen metabolism; urea degradation; CO(2) and NH(3) from urea (urease route): step 1/1. The protein is Urease subunit alpha of Ureaplasma urealyticum serovar 10 (strain ATCC 33699 / Western).